Reading from the N-terminus, the 306-residue chain is MEKLVIGSRGSELALWQANHIKERLKKECSMESEIRIVKTTGDKILDAPLNKIGGKGLFTKELEELLLKGAIDLAVHSLKDVPVVFEKGLDLACITKRADVRDTFLSVKFPDLMSLPKGAKVGTTSLRRSMQIKFKRKDLDTESLRGNVQTRLKKLECGEFDAIILAEAGLCRLNVQGAKYRKAFSVKEMIPSMGQGALGVEMLKNHKHFITLQKLNNEESAFCCHLEREFIKGLNGGCQIPIGVHANLMGDEVKIRAVLGLPNGKEVIAKEKQGDKTKAFDLVQELLEEFLQSGAKEILEKAQLF.

The residue at position 239 (Cys-239) is an S-(dipyrrolylmethanemethyl)cysteine.

Belongs to the HMBS family. As to quaternary structure, monomer. Dipyrromethane is required as a cofactor.

The enzyme catalyses 4 porphobilinogen + H2O = hydroxymethylbilane + 4 NH4(+). Its pathway is porphyrin-containing compound metabolism; protoporphyrin-IX biosynthesis; coproporphyrinogen-III from 5-aminolevulinate: step 2/4. In terms of biological role, tetrapolymerization of the monopyrrole PBG into the hydroxymethylbilane pre-uroporphyrinogen in several discrete steps. In Helicobacter pylori (strain J99 / ATCC 700824) (Campylobacter pylori J99), this protein is Porphobilinogen deaminase (hemC).